A 396-amino-acid polypeptide reads, in one-letter code: S-adenosylmethionine synthase (396 aa).

Position 16 (H16) interacts with ATP. D18 lines the Mg(2+) pocket. K(+) is bound at residue E44. The L-methionine site is built by E57 and Q100. The flexible loop stretch occupies residues 100-110 (QSPDIAQGVDR). Residues 167 to 169 (DAK), 233 to 234 (RF), D242, 248 to 249 (RK), A265, and K269 contribute to the ATP site. D242 contributes to the L-methionine binding site. K273 contacts L-methionine.

Belongs to the AdoMet synthase family. In terms of assembly, homotetramer; dimer of dimers. Requires Mg(2+) as cofactor. The cofactor is K(+).

The protein resides in the cytoplasm. It catalyses the reaction L-methionine + ATP + H2O = S-adenosyl-L-methionine + phosphate + diphosphate. It functions in the pathway amino-acid biosynthesis; S-adenosyl-L-methionine biosynthesis; S-adenosyl-L-methionine from L-methionine: step 1/1. Functionally, catalyzes the formation of S-adenosylmethionine (AdoMet) from methionine and ATP. The overall synthetic reaction is composed of two sequential steps, AdoMet formation and the subsequent tripolyphosphate hydrolysis which occurs prior to release of AdoMet from the enzyme. The protein is S-adenosylmethionine synthase of Paraburkholderia phytofirmans (strain DSM 17436 / LMG 22146 / PsJN) (Burkholderia phytofirmans).